The following is a 415-amino-acid chain: Peptide chain release factor subunit 1 (415 aa).

It belongs to the eukaryotic release factor 1 family. In terms of assembly, heterodimer of two subunits, one of which binds GTP.

It localises to the cytoplasm. Its function is as follows. Directs the termination of nascent peptide synthesis (translation) in response to the termination codons UAA, UAG and UGA. In Methanosarcina mazei (strain ATCC BAA-159 / DSM 3647 / Goe1 / Go1 / JCM 11833 / OCM 88) (Methanosarcina frisia), this protein is Peptide chain release factor subunit 1.